We begin with the raw amino-acid sequence, 107 residues long: UPF0060 membrane protein ZMO1566 (107 aa).

The next 4 membrane-spanning stretches (helical) occupy residues 4-24 (LLYI…WAWI), 29-49 (SPLW…LLTF), 55-75 (AGKA…LWSW), and 84-104 (HWDL…LWMP).

Belongs to the UPF0060 family.

The protein resides in the cell inner membrane. The chain is UPF0060 membrane protein ZMO1566 from Zymomonas mobilis subsp. mobilis (strain ATCC 31821 / ZM4 / CP4).